Consider the following 460-residue polypeptide: Bifunctional protein GlmU (460 aa).

The tract at residues 1–232 (MALNVVILAA…AIEVEGANNR (232 aa)) is pyrophosphorylase. UDP-N-acetyl-alpha-D-glucosamine is bound by residues 8–11 (LAAG), Lys22, Gln73, 78–79 (GT), 100–102 (YGD), Gly137, Glu157, Asn172, and Asn230. A Mg(2+)-binding site is contributed by Asp102. Asn230 provides a ligand contact to Mg(2+). A linker region spans residues 233–253 (VQLAQLERAYQAREAEKLMLA). Residues 254–460 (GANLRDPSRI…GWQRPVKIKK (207 aa)) form an N-acetyltransferase region. UDP-N-acetyl-alpha-D-glucosamine contacts are provided by Arg336 and Lys354. His366 serves as the catalytic Proton acceptor. The UDP-N-acetyl-alpha-D-glucosamine site is built by Tyr369 and Asn380. Acetyl-CoA contacts are provided by residues Ala383, 389–390 (NY), Ser408, Ala426, and Arg443.

In the N-terminal section; belongs to the N-acetylglucosamine-1-phosphate uridyltransferase family. It in the C-terminal section; belongs to the transferase hexapeptide repeat family. In terms of assembly, homotrimer. Mg(2+) is required as a cofactor.

It is found in the cytoplasm. The enzyme catalyses alpha-D-glucosamine 1-phosphate + acetyl-CoA = N-acetyl-alpha-D-glucosamine 1-phosphate + CoA + H(+). The catalysed reaction is N-acetyl-alpha-D-glucosamine 1-phosphate + UTP + H(+) = UDP-N-acetyl-alpha-D-glucosamine + diphosphate. The protein operates within nucleotide-sugar biosynthesis; UDP-N-acetyl-alpha-D-glucosamine biosynthesis; N-acetyl-alpha-D-glucosamine 1-phosphate from alpha-D-glucosamine 6-phosphate (route II): step 2/2. It functions in the pathway nucleotide-sugar biosynthesis; UDP-N-acetyl-alpha-D-glucosamine biosynthesis; UDP-N-acetyl-alpha-D-glucosamine from N-acetyl-alpha-D-glucosamine 1-phosphate: step 1/1. Its pathway is bacterial outer membrane biogenesis; LPS lipid A biosynthesis. Its function is as follows. Catalyzes the last two sequential reactions in the de novo biosynthetic pathway for UDP-N-acetylglucosamine (UDP-GlcNAc). The C-terminal domain catalyzes the transfer of acetyl group from acetyl coenzyme A to glucosamine-1-phosphate (GlcN-1-P) to produce N-acetylglucosamine-1-phosphate (GlcNAc-1-P), which is converted into UDP-GlcNAc by the transfer of uridine 5-monophosphate (from uridine 5-triphosphate), a reaction catalyzed by the N-terminal domain. The protein is Bifunctional protein GlmU of Shewanella baltica (strain OS185).